The sequence spans 635 residues: Biosynthetic arginine decarboxylase (635 aa).

N6-(pyridoxal phosphate)lysine is present on K100. Residue 282 to 292 (LDIGGGLGVDY) coordinates substrate.

The protein belongs to the Orn/Lys/Arg decarboxylase class-II family. SpeA subfamily. Mg(2+) serves as cofactor. The cofactor is pyridoxal 5'-phosphate.

It catalyses the reaction L-arginine + H(+) = agmatine + CO2. It participates in amine and polyamine biosynthesis; agmatine biosynthesis; agmatine from L-arginine: step 1/1. In terms of biological role, catalyzes the biosynthesis of agmatine from arginine. The polypeptide is Biosynthetic arginine decarboxylase (Geotalea uraniireducens (strain Rf4) (Geobacter uraniireducens)).